We begin with the raw amino-acid sequence, 647 residues long: LIM domain kinase 1 (647 aa).

2 LIM zinc-binding domains span residues 25–75 and 84–137; these read CASC…CKKD and CHGC…CGHC. Residues 165 to 258 form the PDZ domain; it reads LVSIPASSHG…LLQLTLEHDP (94 aa). A Phosphoserine modification is found at serine 210. Threonine 229 bears the Phosphothreonine mark. The tract at residues 260 to 319 is disordered; it reads DTLGHGLGPETSPLSSPAYTPSGEAGSSARQKPVLRSCSIDRSPGAGSLGSPASQRKDLG. 4 positions are modified to phosphoserine: serine 298, serine 302, serine 307, and serine 310. The span at 302–313 shows a compositional bias: low complexity; that stretch reads SPGAGSLGSPAS. A Phosphoserine; by MAPKAPK2 modification is found at serine 323. The residue at position 337 (serine 337) is a Phosphoserine. In terms of domain architecture, Protein kinase spans 339-604; it reads LIHGEVLGKG…PSFVKLEHWL (266 aa). Residues 345-353 and lysine 368 each bind ATP; that span reads LGKGCFGQA. Residue aspartate 460 is part of the active site. A Phosphothreonine; by ROCK1 and PAK1 modification is found at threonine 508.

This sequence belongs to the protein kinase superfamily. TKL Ser/Thr protein kinase family. As to quaternary structure, interacts (via LIM domain) with the cytoplasmic domain of NRG1. Interacts with NISCH. Interacts with RLIM and RNF6. Self-associates to form homodimers. Interacts with HSP90AA1; this interaction promotes LIMK1 dimerization and subsequent transphosphorylation. Interacts with CDKN1C. Interacts with SSH1. Interacts with ROCK1. Interacts (via LIM zinc-binding domains) with FAM89B/LRAP25 (via LRR repeat). Forms a tripartite complex with CDC42BPA, CDC42BPB and FAM89B/LRAP25. Post-translationally, autophosphorylated. Phosphorylated on Thr-508 by ROCK1 and PAK1, resulting in activation. Phosphorylated by PAK4 which increases the ability of LIMK1 to phosphorylate cofilin. Phosphorylated at Ser-323 by MAPKAPK2 during activation of VEGFA-induced signaling, which results in activation of LIMK1 and promotion of actin reorganization, cell migration, and tubule formation of endothelial cells. Dephosphorylated and inactivated by SSH1. Phosphorylated by CDC42BP. Ubiquitinated. 'Lys-48'-linked polyubiquitination by RNF6 leads to proteasomal degradation through the 26S proteasome, modulating LIMK1 levels in the growth cone and its effect on axonal outgrowth. Also polyubiquitinated by RLIM. Highest expression in both adult and fetal nervous system. Detected ubiquitously throughout the different regions of adult brain, with highest levels in the cerebral cortex. Expressed to a lesser extent in heart and skeletal muscle.

The protein localises to the cytoplasm. The protein resides in the nucleus. It localises to the cytoskeleton. It is found in the cell projection. Its subcellular location is the lamellipodium. The enzyme catalyses L-seryl-[protein] + ATP = O-phospho-L-seryl-[protein] + ADP + H(+). The catalysed reaction is L-threonyl-[protein] + ATP = O-phospho-L-threonyl-[protein] + ADP + H(+). Its function is as follows. Serine/threonine-protein kinase that plays an essential role in the regulation of actin filament dynamics. Acts downstream of several Rho family GTPase signal transduction pathways. Activated by upstream kinases including ROCK1, PAK1 and PAK4, which phosphorylate LIMK1 on a threonine residue located in its activation loop. LIMK1 subsequently phosphorylates and inactivates the actin binding/depolymerizing factors cofilin-1/CFL1, cofilin-2/CFL2 and destrin/DSTN, thereby preventing the cleavage of filamentous actin (F-actin), and stabilizing the actin cytoskeleton. In this way LIMK1 regulates several actin-dependent biological processes including cell motility, cell cycle progression, and differentiation. Phosphorylates TPPP on serine residues, thereby promoting microtubule disassembly. Stimulates axonal outgrowth and may be involved in brain development. Has a dominant negative effect on actin cytoskeletal changes. Required for atypical chemokine receptor ACKR2-induced phosphorylation of cofilin (CFL1). This Homo sapiens (Human) protein is LIM domain kinase 1 (LIMK1).